The sequence spans 189 residues: Peptidyl-tRNA hydrolase (189 aa).

Residue tyrosine 15 participates in tRNA binding. The Proton acceptor role is filled by histidine 20. TRNA-binding residues include tyrosine 65, asparagine 67, and asparagine 113.

It belongs to the PTH family. Monomer.

It localises to the cytoplasm. It catalyses the reaction an N-acyl-L-alpha-aminoacyl-tRNA + H2O = an N-acyl-L-amino acid + a tRNA + H(+). Its function is as follows. Hydrolyzes ribosome-free peptidyl-tRNAs (with 1 or more amino acids incorporated), which drop off the ribosome during protein synthesis, or as a result of ribosome stalling. Functionally, catalyzes the release of premature peptidyl moieties from peptidyl-tRNA molecules trapped in stalled 50S ribosomal subunits, and thus maintains levels of free tRNAs and 50S ribosomes. This chain is Peptidyl-tRNA hydrolase, found in Caldicellulosiruptor saccharolyticus (strain ATCC 43494 / DSM 8903 / Tp8T 6331).